The following is a 149-amino-acid chain: Flagellar assembly factor FliW (149 aa).

It belongs to the FliW family. Interacts with translational regulator CsrA and flagellin(s).

The protein localises to the cytoplasm. Acts as an anti-CsrA protein, binds CsrA and prevents it from repressing translation of its target genes, one of which is flagellin. Binds to flagellin and participates in the assembly of the flagellum. In Thermotoga maritima (strain ATCC 43589 / DSM 3109 / JCM 10099 / NBRC 100826 / MSB8), this protein is Flagellar assembly factor FliW.